The primary structure comprises 488 residues: Peptidoglycan endopeptidase LytF (488 aa).

Residues Met-1 to Ala-26 form the signal peptide. LysM domains are found at residues Ala-27–Ile-70 and Ser-92–Val-135. Disordered regions lie at residues Ile-70–Val-93, Gly-137–Tyr-176, and Lys-218–Thr-239. 2 stretches are compositionally biased toward low complexity: residues Gly-72 to Val-93 and Ser-140 to Ser-172. A LysM 3 domain is found at Gly-174–Thr-217. Residues Thr-240–Leu-283 enclose the LysM 4 domain. The tract at residues Lys-286–Thr-306 is disordered. Residues Thr-307–Ile-350 enclose the LysM 5 domain. In terms of domain architecture, NlpC/P60 spans Ser-370–Phe-488. The active-site Nucleophile is the Cys-400. Catalysis depends on His-449, which acts as the Proton acceptor. Asn-461 is an active-site residue.

Belongs to the peptidase C40 family.

The protein localises to the secreted. It is found in the cell wall. Is inhibited in vitro by para-hydroxymercuribenzoate, a sulfydryl inhibitor. In terms of biological role, cell wall hydrolase that cleaves gamma-D-glutamate-meso-diaminopimelate bonds in peptidoglycan. LytF is necessary and sufficient for vegetative daughter cell separation, and also seems to play a role in cell autolysis. This is Peptidoglycan endopeptidase LytF (lytF) from Bacillus subtilis (strain 168).